We begin with the raw amino-acid sequence, 296 residues long: Cell division protein DivIB (296 aa).

Residues 1 to 25 (MMEDKIIHTPRFDEQRRMRRKKRQR) lie on the Cytoplasmic side of the membrane. The chain crosses the membrane as a helical span at residues 26–46 (LQLFIFLSIVAIVSLILIYMF). Over 47–296 (TSISYVKKIS…KELNQVKKNS (250 aa)) the chain is Extracellular. Residues 50 to 118 (SYVKKISVND…NTVSINVEEY (69 aa)) enclose the POTRA domain.

Belongs to the FtsQ/DivIB family. DivIB subfamily.

It localises to the cell membrane. Its function is as follows. Cell division protein that may be involved in stabilizing or promoting the assembly of the division complex. This is Cell division protein DivIB from Macrococcus caseolyticus (strain JCSC5402) (Macrococcoides caseolyticum).